Consider the following 610-residue polypeptide: MRYIAGIDIGNSSTEVALATLDESGALSITGSALAETTGIKGTLRNVFGIQEALSLAAKNAGINVSDISLIRINEATPVIGDVAMETITETIITESTMIGHNPKTPGGVGLGVGVTITPEDLLSRPADTPYILVVSSAFDFADVATMINASVRAGYQLTGVILQQDDGVLVSNRLTHPLPIVDEVLHIDRIPLGMLAAIEVAIPGKVIETLSNPYGIATVFGLNADETKNIVPMARALIGNRSAVVVKTPSGDVKARAIPAGNLELQSQGRTVRVDVAAGAEAIMKAVGECPKLDNVTGEAGTNIGGMLEHVRQTMAELTNKPSHEIFIQDLLAVDTSVPVSVTGGLAGEFSLEQAVGIASMVKSDRLQMAMIAQEITQKLNIDVQVGGAEAEAAILGALTTPGTTRPLAILDLGAGSTDASIINPKGEIIATHLAGAGDMVTMIIARELGLEDRYLAEEIKKYPLAKVESLFHLRHEDGSVQFFPTPLPPTVFARVCVVKPDELVPLPGELALEKVRAIRRSAKERVFVTNALRALRQVSPTGNIRDIPFVVLVGGSSLDFEVPQLVTDALAHYRLVAGRGNIRGTEGPRNAVATGLILSWYKAFAHGK.

Position 11-13 (11-13 (NSS)) interacts with ATP. 3 residues coordinate Mg(2+): Thr-105, Asp-166, and Asp-183. Residues 459-462 (EEIK), 557-558 (GS), and Arg-591 contribute to the ATP site.

Belongs to the DdrA/PduG family. In terms of assembly, forms a heterotetramer PduG(2)/PduH(2). Mg(2+) serves as cofactor.

The protein resides in the bacterial microcompartment. The enzyme catalyses ATP + H2O = ADP + phosphate + H(+). It functions in the pathway polyol metabolism; 1,2-propanediol degradation. In terms of biological role, large subunit of the propanediol dehydratase-reactivating factor (DDR), which reactivates suicidally inhibited adenosylcobalamin-dependent propanediol dehydratase (diol dehydratase, DDH) found in the bacterial microcompartment (BMC) dedicated to 1,2-propanediol (1,2-PD) degradation. Reactivates inactivated DDH in the presence of ATP, Mg(2+) and free adenosylcobalamin (AdoCbl), by mediating the exchange of the tightly bound damaged cofactor AdoCbl for a free intact one. This subunit contains the adenosine nucleotide binding site. Functionally, expression of a cosmid containing the full 21-gene pdu operon in E.coli allows E.coli to grow on 1,2-propanediol (1,2-PD) with the appearance of bacterial microcompartments (BMC) in its cytoplasm. Its function is as follows. The 1,2-PD-specific bacterial microcompartment (BMC) concentrates low levels of 1,2-PD catabolic enzymes, concentrates volatile reaction intermediates thus enhancing pathway flux and keeps the level of toxic, mutagenic propionaldehyde low. This chain is Propanediol dehydratase-reactivating factor large subunit, found in Citrobacter freundii.